Consider the following 162-residue polypeptide: Regulator of sigma D (162 aa).

The protein belongs to the Rsd/AlgQ family. Interacts with RpoD.

It localises to the cytoplasm. In terms of biological role, binds RpoD and negatively regulates RpoD-mediated transcription activation by preventing the interaction between the primary sigma factor RpoD with the catalytic core of the RNA polymerase and with promoter DNA. May be involved in replacement of the RNA polymerase sigma subunit from RpoD to RpoS during the transition from exponential growth to the stationary phase. This is Regulator of sigma D from Salmonella choleraesuis (strain SC-B67).